Here is a 233-residue protein sequence, read N- to C-terminus: Guanylate kinase (233 aa).

In terms of domain architecture, Guanylate kinase-like spans 3–184 (GTIFIISAPS…AVEQLRAIVL (182 aa)). 10-17 (APSGSGKS) contacts ATP.

The protein belongs to the guanylate kinase family.

Its subcellular location is the cytoplasm. It carries out the reaction GMP + ATP = GDP + ADP. Its function is as follows. Essential for recycling GMP and indirectly, cGMP. This is Guanylate kinase from Koribacter versatilis (strain Ellin345).